Here is a 151-residue protein sequence, read N- to C-terminus: MKKIDVKILDQRIGTEFPLPTYATEGSAGLDLRALIDAPMTVEAGQTVLIPTGLSLYIADPTLAAVILPRSGLGHKHGIVLGNLVGLIDSDYQGPLMVSLWNRSTEPFKVEVGDRIAQLVFVPVVQAEFNVVSDFAQTERGEGGFGHSGKQ.

Residues 70–72 (RSG), N83, 87–89 (LID), and M97 contribute to the substrate site.

It belongs to the dUTPase family. It depends on Mg(2+) as a cofactor.

It carries out the reaction dUTP + H2O = dUMP + diphosphate + H(+). It functions in the pathway pyrimidine metabolism; dUMP biosynthesis; dUMP from dCTP (dUTP route): step 2/2. This enzyme is involved in nucleotide metabolism: it produces dUMP, the immediate precursor of thymidine nucleotides and it decreases the intracellular concentration of dUTP so that uracil cannot be incorporated into DNA. In Pasteurella multocida (strain Pm70), this protein is Deoxyuridine 5'-triphosphate nucleotidohydrolase.